The following is a 279-amino-acid chain: Movement protein (279 aa).

Low complexity predominate over residues 256 to 266 (PPIAIGSPSAS). The segment at 256–279 (PPIAIGSPSASRNNSFRSQVVNGL) is disordered. The span at 267-279 (RNNSFRSQVVNGL) shows a compositional bias: polar residues.

The protein belongs to the cucumovirus movement protein family.

The protein localises to the host cell junction. Its subcellular location is the host plasmodesma. In terms of biological role, transports viral genome to neighboring plant cells directly through plasmosdesmata, without any budding. The movement protein allows efficient cell to cell propagation, by bypassing the host cell wall barrier. Acts by forming a tubular structure at the host plasmodesmata, enlarging it enough to allow free passage of virion capsids. This chain is Movement protein, found in Cucumis sativus (Cucumber).